The chain runs to 191 residues: UPF0149 protein VV1_1551 (191 aa).

Belongs to the UPF0149 family.

The protein is UPF0149 protein VV1_1551 of Vibrio vulnificus (strain CMCP6).